A 169-amino-acid polypeptide reads, in one-letter code: MVSQRRDADAPKSILESLAGTRVLVVEARYYDDIADELLAGARAAIEAVGAEARIFTVPGALEIPSAIAILMEAGRKAGGPYDAAVALGCVIRGETGHYDIVAGESARALMDLSVSEHLPLGNGILTVETMEQALARARVSEMNKGGGAAEAALSLLAIKRAANLEPAR.

5-amino-6-(D-ribitylamino)uracil is bound by residues tyrosine 30, 61–63 (ALE), and 90–92 (CVI). 95-96 (ET) is a (2S)-2-hydroxy-3-oxobutyl phosphate binding site. Histidine 98 acts as the Proton donor in catalysis. Asparagine 123 is a binding site for 5-amino-6-(D-ribitylamino)uracil. Arginine 137 is a binding site for (2S)-2-hydroxy-3-oxobutyl phosphate.

This sequence belongs to the DMRL synthase family.

The enzyme catalyses (2S)-2-hydroxy-3-oxobutyl phosphate + 5-amino-6-(D-ribitylamino)uracil = 6,7-dimethyl-8-(1-D-ribityl)lumazine + phosphate + 2 H2O + H(+). The protein operates within cofactor biosynthesis; riboflavin biosynthesis; riboflavin from 2-hydroxy-3-oxobutyl phosphate and 5-amino-6-(D-ribitylamino)uracil: step 1/2. In terms of biological role, catalyzes the formation of 6,7-dimethyl-8-ribityllumazine by condensation of 5-amino-6-(D-ribitylamino)uracil with 3,4-dihydroxy-2-butanone 4-phosphate. This is the penultimate step in the biosynthesis of riboflavin. The protein is 6,7-dimethyl-8-ribityllumazine synthase of Methylorubrum populi (strain ATCC BAA-705 / NCIMB 13946 / BJ001) (Methylobacterium populi).